Consider the following 210-residue polypeptide: High frequency lysogenization protein HflD homolog (210 aa).

Residues 103-130 adopt a coiled-coil conformation; sequence EAKAKLAERLQQIERQLPLYENDIMADQ.

It belongs to the HflD family.

It localises to the cytoplasm. It is found in the cell inner membrane. This Actinobacillus pleuropneumoniae serotype 5b (strain L20) protein is High frequency lysogenization protein HflD homolog.